The chain runs to 750 residues: Polyribonucleotide nucleotidyltransferase (750 aa).

Positions 492 and 498 each coordinate Mg(2+). Positions 559–618 (PQLSVVEVNPEIIRVIIGPGGKNIKAITSATGASIDIEDSGRISIFAPTKESMDMAREMV) constitute a KH domain. Positions 628–695 (GKNYTAKVRK…NDGRVRASRK (68 aa)) constitute an S1 motif domain. Residues 705–750 (EWDPADTARPPRKPRDRDDRGDRGGRGDRGDRGGRNGRGGDRRDRR) form a disordered region. Basic and acidic residues predominate over residues 717 to 750 (KPRDRDDRGDRGGRGDRGDRGGRNGRGGDRRDRR).

This sequence belongs to the polyribonucleotide nucleotidyltransferase family. It depends on Mg(2+) as a cofactor.

The protein resides in the cytoplasm. The catalysed reaction is RNA(n+1) + phosphate = RNA(n) + a ribonucleoside 5'-diphosphate. In terms of biological role, involved in mRNA degradation. Catalyzes the phosphorolysis of single-stranded polyribonucleotides processively in the 3'- to 5'-direction. This chain is Polyribonucleotide nucleotidyltransferase, found in Oleidesulfovibrio alaskensis (strain ATCC BAA-1058 / DSM 17464 / G20) (Desulfovibrio alaskensis).